A 238-amino-acid chain; its full sequence is Small ribosomal subunit protein uS2c (238 aa).

This sequence belongs to the universal ribosomal protein uS2 family.

It is found in the plastid. Its subcellular location is the chloroplast. The sequence is that of Small ribosomal subunit protein uS2c (rps2) from Oltmannsiellopsis viridis (Marine flagellate).